Reading from the N-terminus, the 326-residue chain is Aspartate carbamoyltransferase catalytic subunit (326 aa).

The carbamoyl phosphate site is built by arginine 55 and threonine 56. Lysine 83 is a binding site for L-aspartate. Residues arginine 105, histidine 135, and glutamine 138 each contribute to the carbamoyl phosphate site. L-aspartate contacts are provided by arginine 176 and arginine 230. Carbamoyl phosphate is bound by residues glycine 271 and proline 272.

It belongs to the aspartate/ornithine carbamoyltransferase superfamily. ATCase family. Heterododecamer (2C3:3R2) of six catalytic PyrB chains organized as two trimers (C3), and six regulatory PyrI chains organized as three dimers (R2).

The enzyme catalyses carbamoyl phosphate + L-aspartate = N-carbamoyl-L-aspartate + phosphate + H(+). It functions in the pathway pyrimidine metabolism; UMP biosynthesis via de novo pathway; (S)-dihydroorotate from bicarbonate: step 2/3. Catalyzes the condensation of carbamoyl phosphate and aspartate to form carbamoyl aspartate and inorganic phosphate, the committed step in the de novo pyrimidine nucleotide biosynthesis pathway. The protein is Aspartate carbamoyltransferase catalytic subunit of Streptomyces coelicolor (strain ATCC BAA-471 / A3(2) / M145).